The primary structure comprises 289 residues: ATP synthase gamma chain (289 aa).

The protein belongs to the ATPase gamma chain family. F-type ATPases have 2 components, CF(1) - the catalytic core - and CF(0) - the membrane proton channel. CF(1) has five subunits: alpha(3), beta(3), gamma(1), delta(1), epsilon(1). CF(0) has three main subunits: a, b and c.

It localises to the cell inner membrane. In terms of biological role, produces ATP from ADP in the presence of a proton gradient across the membrane. The gamma chain is believed to be important in regulating ATPase activity and the flow of protons through the CF(0) complex. The protein is ATP synthase gamma chain of Phocaeicola vulgatus (strain ATCC 8482 / DSM 1447 / JCM 5826 / CCUG 4940 / NBRC 14291 / NCTC 11154) (Bacteroides vulgatus).